We begin with the raw amino-acid sequence, 846 residues long: DNA mismatch repair protein MutS (846 aa).

Residue 610–617 (GPNMGGKS) coordinates ATP.

Belongs to the DNA mismatch repair MutS family.

This protein is involved in the repair of mismatches in DNA. It is possible that it carries out the mismatch recognition step. This protein has a weak ATPase activity. This is DNA mismatch repair protein MutS from Legionella pneumophila (strain Paris).